The chain runs to 239 residues: Proteasome activator complex subunit 2 (239 aa).

An N-acetylalanine modification is found at Ala-2. Residue Ser-10 is modified to Phosphoserine. Positions 65-86 are disordered; the sequence is DIPIPDPPPKDDEMETDKQEKK. The segment covering 72-86 has biased composition (basic and acidic residues); it reads PPKDDEMETDKQEKK.

It belongs to the PA28 family. Heterodimer of PSME1 and PSME2, which forms a hexameric ring.

Its function is as follows. Implicated in immunoproteasome assembly and required for efficient antigen processing. The PA28 activator complex enhances the generation of class I binding peptides by altering the cleavage pattern of the proteasome. The polypeptide is Proteasome activator complex subunit 2 (PSME2) (Bos taurus (Bovine)).